Reading from the N-terminus, the 178-residue chain is Large ribosomal subunit protein uL6 (178 aa).

The protein belongs to the universal ribosomal protein uL6 family. Part of the 50S ribosomal subunit.

This protein binds to the 23S rRNA, and is important in its secondary structure. It is located near the subunit interface in the base of the L7/L12 stalk, and near the tRNA binding site of the peptidyltransferase center. This chain is Large ribosomal subunit protein uL6, found in Campylobacter concisus (strain 13826).